The sequence spans 112 residues: Large ribosomal subunit protein uL22 (112 aa).

Belongs to the universal ribosomal protein uL22 family. Part of the 50S ribosomal subunit.

In terms of biological role, this protein binds specifically to 23S rRNA; its binding is stimulated by other ribosomal proteins, e.g. L4, L17, and L20. It is important during the early stages of 50S assembly. It makes multiple contacts with different domains of the 23S rRNA in the assembled 50S subunit and ribosome. Functionally, the globular domain of the protein is located near the polypeptide exit tunnel on the outside of the subunit, while an extended beta-hairpin is found that lines the wall of the exit tunnel in the center of the 70S ribosome. This Lawsonia intracellularis (strain PHE/MN1-00) protein is Large ribosomal subunit protein uL22.